A 492-amino-acid chain; its full sequence is Excitatory amino acid transporter (492 aa).

Residues 1–7 (MVSWIRK) lie on the Cytoplasmic side of the membrane. The next 3 membrane-spanning stretches (helical) occupy residues 8–28 (NLLL…GFLL), 47–67 (LLMH…LISG), and 85–105 (TYYM…VLVI). Residues 106–191 (HPGDPTIKKE…VKASVEYTSG (86 aa)) are Extracellular-facing. 2 N-linked (GlcNAc...) asparagine glycosylation sites follow: Asn166 and Asn176. Helical transmembrane passes span 192–212 (MNVL…SQLG), 228–248 (VIMK…LCLI), 270–290 (VTVL…IFFV), 358–378 (AVAA…GQVV), and 389–409 (IGAA…LTAV).

Belongs to the dicarboxylate/amino acid:cation symporter (DAACS) (TC 2.A.23) family.

The protein localises to the membrane. Its function is as follows. Transports L-glutamate and also L- and D-aspartate. Essential for terminating the postsynaptic action of glutamate by rapidly removing released glutamate from the synaptic cleft. Acts as a symport by cotransporting sodium. The protein is Excitatory amino acid transporter (GLT-1) of Onchocerca volvulus.